A 193-amino-acid polypeptide reads, in one-letter code: Protein PrsJ (193 aa).

A signal peptide spans 1–27 (MVVNKTTAVLYLIALSLSGFIHTFLRA).

The protein localises to the periplasm. This protein maintains pilus integrity and thus is an important participant in pilus assembly. It may function as molecular chaperone directly or indirectly in the correct assembly of PapA subunits. This Escherichia coli protein is Protein PrsJ (prsJ).